Reading from the N-terminus, the 377-residue chain is Histidinol-phosphate aminotransferase (377 aa).

At lysine 232 the chain carries N6-(pyridoxal phosphate)lysine.

Belongs to the class-II pyridoxal-phosphate-dependent aminotransferase family. Histidinol-phosphate aminotransferase subfamily. As to quaternary structure, homodimer. Pyridoxal 5'-phosphate serves as cofactor.

It catalyses the reaction L-histidinol phosphate + 2-oxoglutarate = 3-(imidazol-4-yl)-2-oxopropyl phosphate + L-glutamate. Its pathway is amino-acid biosynthesis; L-histidine biosynthesis; L-histidine from 5-phospho-alpha-D-ribose 1-diphosphate: step 7/9. This Mycobacterium sp. (strain KMS) protein is Histidinol-phosphate aminotransferase.